The sequence spans 217 residues: KS1 protein (217 aa).

The N-terminal stretch at 1–16 (MKLIIVLVMMLVCVYS) is a signal peptide. Over residues 24-47 (PKNHEVPAKKQFAETKVEKKKRSD) the composition is skewed to basic and acidic residues. Disordered stretches follow at residues 24–58 (PKNH…DDDD) and 72–205 (EDDD…LKIK). Tandem repeats lie at residues 32–81 (KKQF…VDGG) and 98–147 (KKKK…YDED). A 2 X 50 AA approximate repeats region spans residues 32–147 (KKQFAETKVE…EEDDDCYDED (116 aa)). 2 stretches are compositionally biased toward acidic residues: residues 48 to 58 (DGDEEICDDDD) and 72 to 94 (EDDD…DDCQ). The span at 98-110 (KKKKRETKPKLKK) shows a compositional bias: basic residues. Positions 114–145 (DEEEEECEEDDEDCEVEVDIEECDEEDDDCYD) are enriched in acidic residues. Residues 149-188 (KKKKENKLKKESKKKNSKKTVPKNAKKSSKRSTSTKKTSQ) show a composition bias toward basic residues.

As to expression, expressed in tentacle-specific epithelial cells (battery cells) as well as in a small fraction of ectodermal epithelial cells in the gastric region subjacent to the tentacles (the tentacle formation region). The later cells are committed to become battery cells.

Its function is as follows. Responds to early signals of head formation in hydra. This chain is KS1 protein (KS1), found in Hydra vulgaris (Hydra).